A 90-amino-acid polypeptide reads, in one-letter code: Small ribosomal subunit protein bS20 (90 aa).

The segment covering 1-11 (MAHHKSAKKRI) has biased composition (basic residues). The disordered stretch occupies residues 1–22 (MAHHKSAKKRIRQTERRTEVNR). Residues 12-22 (RQTERRTEVNR) show a composition bias toward basic and acidic residues.

The protein belongs to the bacterial ribosomal protein bS20 family.

In terms of biological role, binds directly to 16S ribosomal RNA. This is Small ribosomal subunit protein bS20 from Paramagnetospirillum magneticum (strain ATCC 700264 / AMB-1) (Magnetospirillum magneticum).